Reading from the N-terminus, the 129-residue chain is Small ribosomal subunit protein uS11c (129 aa).

Belongs to the universal ribosomal protein uS11 family. Part of the 30S ribosomal subunit.

The protein localises to the plastid. It localises to the chloroplast. The polypeptide is Small ribosomal subunit protein uS11c (Oltmannsiellopsis viridis (Marine flagellate)).